The primary structure comprises 538 residues: tRNA-2-methylthio-N(6)-dimethylallyladenosine synthase (538 aa).

Residues 1–23 (MNEEQRLGRNGNTDAVSTKEAGS) are disordered. Residues 95–213 (KKFLVRTYGC…LPHLLRNALF (119 aa)) form the MTTase N-terminal domain. [4Fe-4S] cluster is bound by residues Cys-104, Cys-140, Cys-174, Cys-250, Cys-254, and Cys-257. The Radical SAM core domain maps to 236–466 (REGKTQAWVN…NALVNDISAQ (231 aa)). Positions 469–532 (LEYQDKVVEV…TWSLNGEMVE (64 aa)) constitute a TRAM domain.

The protein belongs to the methylthiotransferase family. MiaB subfamily. Monomer. [4Fe-4S] cluster serves as cofactor.

The protein localises to the cytoplasm. It catalyses the reaction N(6)-dimethylallyladenosine(37) in tRNA + (sulfur carrier)-SH + AH2 + 2 S-adenosyl-L-methionine = 2-methylsulfanyl-N(6)-dimethylallyladenosine(37) in tRNA + (sulfur carrier)-H + 5'-deoxyadenosine + L-methionine + A + S-adenosyl-L-homocysteine + 2 H(+). Catalyzes the methylthiolation of N6-(dimethylallyl)adenosine (i(6)A), leading to the formation of 2-methylthio-N6-(dimethylallyl)adenosine (ms(2)i(6)A) at position 37 in tRNAs that read codons beginning with uridine. In Halalkalibacterium halodurans (strain ATCC BAA-125 / DSM 18197 / FERM 7344 / JCM 9153 / C-125) (Bacillus halodurans), this protein is tRNA-2-methylthio-N(6)-dimethylallyladenosine synthase.